The chain runs to 348 residues: Nicotinate-nucleotide--dimethylbenzimidazole phosphoribosyltransferase (348 aa).

Glu-315 acts as the Proton acceptor in catalysis.

The protein belongs to the CobT family.

It catalyses the reaction 5,6-dimethylbenzimidazole + nicotinate beta-D-ribonucleotide = alpha-ribazole 5'-phosphate + nicotinate + H(+). It functions in the pathway nucleoside biosynthesis; alpha-ribazole biosynthesis; alpha-ribazole from 5,6-dimethylbenzimidazole: step 1/2. Catalyzes the synthesis of alpha-ribazole-5'-phosphate from nicotinate mononucleotide (NAMN) and 5,6-dimethylbenzimidazole (DMB). The polypeptide is Nicotinate-nucleotide--dimethylbenzimidazole phosphoribosyltransferase (Dechloromonas aromatica (strain RCB)).